The sequence spans 664 residues: Macoilin (664 aa).

Helical transmembrane passes span 28–48 (TFLYLKFLVVWALVLLADFVL), 75–95 (AFSVFFVCVAFTSNIICLLFI), 120–140 (VCLPTVSLWILFVYIEAAIRF), and 154–174 (FAAHCIGYPVVTLGFGFKSYV). Positions 252–265 (YREKGKEKDKDAKK) are enriched in basic and acidic residues. The disordered stretch occupies residues 252-274 (YREKGKEKDKDAKKHNLGINNNN). A Phosphoserine modification is found at Ser-305. A compositionally biased stretch (polar residues) spans 320 to 348 (KNYKNASGVVNSSPRSHSATNGSIPSSSS). A disordered region spans residues 320–375 (KNYKNASGVVNSSPRSHSATNGSIPSSSSKNEKKQRCTSKGPSAHKDLMENCIPNN). Asn-324 carries an N-linked (GlcNAc...) asparagine glycan. The residue at position 332 (Ser-332) is a Phosphoserine. 2 N-linked (GlcNAc...) asparagine glycosylation sites follow: Asn-340 and Asn-452. The disordered stretch occupies residues 630 to 664 (TSPLSPVSPHYSSKFVETSPSGLDPNASVYQPLKK). A phosphoserine mark is found at Ser-631 and Ser-634. N-linked (GlcNAc...) asparagine glycosylation occurs at Asn-655.

This sequence belongs to the macoilin family.

It is found in the rough endoplasmic reticulum membrane. Its subcellular location is the nucleus membrane. In terms of biological role, plays a role in the regulation of neuronal activity. In Rattus norvegicus (Rat), this protein is Macoilin.